We begin with the raw amino-acid sequence, 292 residues long: MVGIQRLIKHDDGTVQEISITADGWVKESYYKKKTPVKPDSNPGVKYEELEPVHRVFSKKPTCQQLFFYLLFWWTYLTIVVLLTVPLNPYQIHRSYRLMMGPASYPINCNRATPDRYSRSCFSSFFCTWDIFMPEIKVQNETFYPNFTKSDGSPADYSSALLWATSFITNPNCTNFTVLYSDSSNSSQRNDSDYEVATFVMLEGLFMLRHKCHPETVYLGRRRCGAHRWRFVNVYDTSYLNHSTCSFDWASLSNASYTPQLGPNCSMANLTEEELKSGFYLHLQQVEIKPSQ.

The chain crosses the membrane as a helical span at residues 66–86 (LFFYLLFWWTYLTIVVLLTVP).

The protein resides in the host membrane. This is an uncharacterized protein from Alcelaphine herpesvirus 1 (strain C500) (AlHV-1).